The primary structure comprises 315 residues: Mycothiol acetyltransferase (315 aa).

N-acetyltransferase domains follow at residues 8–145 and 163–315; these read VETS…LPLD and VSLR…DATA. Glutamate 39 is a binding site for 1D-myo-inositol 2-(L-cysteinylamino)-2-deoxy-alpha-D-glucopyranoside. Residues 81-83 and 89-94 contribute to the acetyl-CoA site; these read LVV and HHGVGT. Glutamate 190, lysine 229, and glutamate 243 together coordinate 1D-myo-inositol 2-(L-cysteinylamino)-2-deoxy-alpha-D-glucopyranoside. 247 to 249 is a binding site for acetyl-CoA; it reads LGV. Tyrosine 281 is a 1D-myo-inositol 2-(L-cysteinylamino)-2-deoxy-alpha-D-glucopyranoside binding site. Acetyl-CoA is bound at residue 286-291; that stretch reads NTVAIR.

It belongs to the acetyltransferase family. MshD subfamily. Monomer.

It catalyses the reaction 1D-myo-inositol 2-(L-cysteinylamino)-2-deoxy-alpha-D-glucopyranoside + acetyl-CoA = mycothiol + CoA + H(+). Functionally, catalyzes the transfer of acetyl from acetyl-CoA to desacetylmycothiol (Cys-GlcN-Ins) to form mycothiol. The chain is Mycothiol acetyltransferase from Sanguibacter keddieii (strain ATCC 51767 / DSM 10542 / NCFB 3025 / ST-74).